We begin with the raw amino-acid sequence, 247 residues long: Neurotrophic factor BDNF precursor form (247 aa).

A signal peptide spans 1-18 (MTILFLTMVISYFGCMKA). The propeptide occupies 19–128 (APMKEANVRG…AANMSMRVRR (110 aa)). N-linked (GlcNAc...) asparagine glycosylation occurs at Asn121. 3 disulfide bridges follow: Cys141-Cys208, Cys186-Cys237, and Cys196-Cys239.

Belongs to the NGF-beta family. As to quaternary structure, monomers and homodimers. Binds to NTRK2/TRKB. Can form heterodimers with other neurotrophin family members, such as NTF3 and NTF4 (in vitro), but the physiological relevance of this is not clear. BDNF precursor form: interacts with the heterodimer formed by NGFR and SORCS2. Mature BDNF has much lower affinity for the heterodimer formed by NGFR and SORCS2. In terms of processing, N-glycosylated and glycosulfated, contrary to mature BDNF. Mature BDNF is produced by proteolytic removal of the propeptide, catalyzed by a FURIN family member. In addition, the precursor form is proteolytically cleaved within the propeptide, but this is not an obligatory intermediate for the production of mature BDNF. Can be converted into mature BDNF by plasmin (PLG).

It localises to the secreted. Its function is as follows. Important signaling molecule that activates signaling cascades downstream of NTRK2. During development, promotes the survival and differentiation of selected neuronal populations of the peripheral and central nervous systems. Participates in axonal growth, pathfinding and in the modulation of dendritic growth and morphology. Major regulator of synaptic transmission and plasticity at adult synapses in many regions of the CNS. The versatility of BDNF is emphasized by its contribution to a range of adaptive neuronal responses including long-term potentiation (LTP), long-term depression (LTD), certain forms of short-term synaptic plasticity, as well as homeostatic regulation of intrinsic neuronal excitability. In terms of biological role, important signaling molecule that activates signaling cascades downstream of NTRK2. Activates signaling cascades via the heterodimeric receptor formed by NGFR and SORCS2. Signaling via NGFR and SORCS2 plays a role in synaptic plasticity and long-term depression (LTD). Binding to NGFR and SORCS2 promotes neuronal apoptosis. Promotes neuronal growth cone collapse. The sequence is that of Neurotrophic factor BDNF precursor form (BDNF) from Ailurus fulgens (Himalayan red panda).